A 320-amino-acid polypeptide reads, in one-letter code: tRNA N6-adenosine threonylcarbamoyltransferase (320 aa).

Fe cation is bound by residues H114 and H118. Substrate is bound by residues 136–140 (VVSGG), D169, G182, D186, and N273. D297 provides a ligand contact to Fe cation.

It belongs to the KAE1 / TsaD family. The cofactor is Fe(2+).

The protein localises to the cytoplasm. The catalysed reaction is L-threonylcarbamoyladenylate + adenosine(37) in tRNA = N(6)-L-threonylcarbamoyladenosine(37) in tRNA + AMP + H(+). Its function is as follows. Required for the formation of a threonylcarbamoyl group on adenosine at position 37 (t(6)A37) in tRNAs that read codons beginning with adenine. Is involved in the transfer of the threonylcarbamoyl moiety of threonylcarbamoyl-AMP (TC-AMP) to the N6 group of A37, together with TsaE and TsaB. TsaD likely plays a direct catalytic role in this reaction. This chain is tRNA N6-adenosine threonylcarbamoyltransferase, found in Ureaplasma urealyticum serovar 10 (strain ATCC 33699 / Western).